The primary structure comprises 137 residues: Drosulfakinins (137 aa).

An N-terminal signal peptide occupies residues 1 to 31; sequence MGLRSCTHFATLVIPLWALAFCFLVVVPVPA. Residues 32–74 constitute a propeptide that is removed on maturation; that stretch reads QTNLQTSKGDRRLQDLESNMGAESDQPNANLVRPSLSRFGDKR. Position 81 is a phenylalanine amide (Phe-81). A propeptide spanning residues 85–107 is cleaved from the precursor; it reads VPRPMIPIELDLLMDNDDENTKA. Tyr-113 carries the post-translational modification Sulfotyrosine. Residue Phe-118 is modified to Phenylalanine amide. At Tyr-130 the chain carries Sulfotyrosine. The residue at position 135 (Phe-135) is a Phenylalanine amide.

It belongs to the gastrin/cholecystokinin family.

The protein localises to the secreted. Its function is as follows. Drosulfakinin-0 (DSK 0) plays diverse biological roles including regulating gut muscle contraction in adults but not in larvae. In Drosophila yakuba (Fruit fly), this protein is Drosulfakinins.